The chain runs to 353 residues: Major outer membrane protein (353 aa).

Residues 1–20 form the signal peptide; that stretch reads MKKTIVALAVAAVAATSANA.

In terms of assembly, disulfide bond interactions within and between MOMP molecules and other components form high molecular-weight oligomers.

The protein resides in the cell outer membrane. In terms of biological role, structural rigidity of the outer membrane of elementary bodies and porin forming, permitting diffusion of solutes through the intracellular reticulate body membrane. The chain is Major outer membrane protein (ompH) from Pasteurella multocida.